Reading from the N-terminus, the 114-residue chain is Ribulose bisphosphate carboxylase small subunit 2 (114 aa).

It belongs to the RuBisCO small chain family. Heterohexadecamer of 8 large and 8 small subunits. Forms a CsoS2-CsoS1-RuBisCO complex.

It localises to the carboxysome. Its function is as follows. RuBisCO catalyzes two reactions: the carboxylation of D-ribulose 1,5-bisphosphate, the primary event in carbon dioxide fixation, as well as the oxidative fragmentation of the pentose substrate. Both reactions occur simultaneously and in competition at the same active site. Although the small subunit is not catalytic it is essential for maximal activity. Functionally, replacing the endogenous type I ccbLS genes in H.neapolitanus with this carboxysomally targeted enzyme reconstitutes RuBisCO with about 25% of normal activity; the active enzyme is targeted to carboxysomes. In Hydrogenovibrio crunogenus (strain DSM 25203 / XCL-2) (Thiomicrospira crunogena), this protein is Ribulose bisphosphate carboxylase small subunit 2.